The chain runs to 946 residues: MEPRGAAAGEPEPAVSPSFQARLWKNLQLGVGKGKGGGGGRAGGPERRTAATPTPSLPPPKTTQDVGSTGSRWSGFKKRKQVLDRVFSSSQPNLCCSSPEPLEPGGAGRAEQGSTLRRRLREHLLPVAKGSSTAAGTVGVTPPGGRSPDSAPSSSASSSLSSSPQPPPRGDRIRDEGTRRGSPEAHLCHQKSSSLPGTACLEQLLEPAPPPAEPARRPAEPQSLQKGEELDCSQKINPVETSNADVPLADPGMYQLDITLRRGQSLAARDRGGTSDPYVKFKIGRKEVFRSKIIHKNLNPVWEEKACVLIDHLREPLYIKVFDYDFGLQDDFMGSAFLDLTQLELNRPTDVTLTLKDPHYPDHDLGIILLSVILTPKEGEPRDVTMLMRKSWKRSSKFQTQSLRLSDQHRKSHLWRGIVSITLIEGRDLKAMDSNGLSDPYVKFRLGHQKYKSKIMPKTLNPQWREQFDFHLYEERGGVMDITAWDKDAGKRDDFIGRCQVDLSSLSREQTHKLELQLEEGEGHLVLLVTLTASATVSISDLSVNSMEDHKEREEILKRYSPLRIFNNIKDVGFLQVKVIRAEGLMAADVTGKSDPFCVVELNNDRLLTHTVYKNLNPEWNKVFTFNIKDIHSVLEVTVYDEDRDRSADFLGRVAIPLLSIQNGEQKAYVLKNKQLTGPTKGVIHLEIDVIFNAVKASLRTLIPKERKYIEEENRLSKQLLLRNFIRTKRCVMVLVNAAYYVNSCFDWDSPPRSLAAFVLFLLVVWNFELYMIPLLLLLLLTWNYFLIISGKDNRQRDTVVEDMLEDEEEEDDRDDKDGEKKGFINKIYAIQEVCVSVQNILDEAASLGERVKNTFNWTVPFLSWLAIIALCVFTAILYFIPLRYIVLVWGINKFTKKLRSPYAIDNNELLDFLSRVPSDVQVVQYQELKPDHSHSPYKRKKNNLG.

Disordered regions lie at residues 28 to 193 and 205 to 229; these read QLGV…QKSS and LEPA…KGEE. Gly residues predominate over residues 31 to 43; it reads VGKGKGGGGGRAG. Residues 87-96 show a composition bias toward polar residues; the sequence is FSSSQPNLCC. Residues 143 to 163 are compositionally biased toward low complexity; the sequence is PGGRSPDSAPSSSASSSLSSS. A compositionally biased stretch (basic and acidic residues) spans 169–187; the sequence is RGDRIRDEGTRRGSPEAHL. 3 consecutive C2 domains span residues 235 to 353, 399 to 516, and 550 to 671; these read KINP…DVTL, QTQS…KLEL, and HKER…AYVL. Aspartate 270, aspartate 276, aspartate 323, aspartate 325, aspartate 331, aspartate 433, aspartate 439, aspartate 486, aspartate 488, aspartate 494, aspartate 589, aspartate 595, aspartate 641, aspartate 643, and aspartate 649 together coordinate Ca(2+). Helical transmembrane passes span 758–778 and 861–881; these read FVLF…LLLL and PFLS…LYFI.

It belongs to the MCTP family. It depends on Ca(2+) as a cofactor. Expressed in the brain and central nervous system (at protein level). Isoform 1 and isoform 2 are expressed in the brain, kidney, liver, heart, lung, skeletal muscle, testis and spleen. Isoform 2 shows a higher expression in the brain, heart and skeletal muscle.

The protein localises to the cytoplasmic vesicle. It is found in the secretory vesicle. Its subcellular location is the synaptic vesicle membrane. The protein resides in the recycling endosome. It localises to the endoplasmic reticulum membrane. Functionally, calcium sensor which is essential for the stabilization of normal baseline neurotransmitter release and for the induction and long-term maintenance of presynaptic homeostatic plasticity. Overexpression in cultured neurons significantly inhibits neuronal transferrin endocytosis, secretory vesicle retrieval, cell migration, and oxidative stress from glutamate toxicity. This Rattus norvegicus (Rat) protein is Multiple C2 and transmembrane domain-containing protein 1.